The sequence spans 451 residues: MKRFTRAYSSATTTLGAAPIPASKIKYIPSTGTYPKGFVASGVFVGVKPGNTSKPDLAIISSDRPCAAAGVFTKNKFQAAPVTFSRKLLQQKKNAGLRSVVINSGNANAVTGTGGLEDATNMARTTDQRVGDEDSTLVMSTGVIGQRLPIQKIVDHIPMAYHKAGDSHSHWLNCAKAICTTDTFPKLMSRTFELPSSPGVEYRIAGLTKGAGMIAPNMATLLTVLATDAPIAPAVMPNVLRHAVDRSFNAITIDGDSSTNDTVALLANGAAGGKEIASEQSPDFEAFQGLLTEFSADLAKYIVRDGEGATKFVTIRVVDSATEEAARQVARSIATSPLVKTALYGKDANWGRILCAAGYALISPPGQPINDVPEIVPERTNVSFVPTDGSTELKLLVDGEPEQVNEERASEILAMEDLEIVVRLGTGDKSAVHWTCDFSHDYVTINGDYRT.

T180, K209, T220, E307, N446, and T451 together coordinate substrate. Residue T220 is the Nucleophile of the active site.

It belongs to the ArgJ family. In terms of assembly, heterodimer of an alpha and a beta chain. Post-translationally, the alpha and beta chains are autoproteolytically processed from a single precursor protein within the mitochondrion.

The protein localises to the mitochondrion matrix. It catalyses the reaction N(2)-acetyl-L-ornithine + L-glutamate = N-acetyl-L-glutamate + L-ornithine. The catalysed reaction is L-glutamate + acetyl-CoA = N-acetyl-L-glutamate + CoA + H(+). It functions in the pathway amino-acid biosynthesis; L-arginine biosynthesis; L-ornithine and N-acetyl-L-glutamate from L-glutamate and N(2)-acetyl-L-ornithine (cyclic): step 1/1. The protein operates within amino-acid biosynthesis; L-arginine biosynthesis; N(2)-acetyl-L-ornithine from L-glutamate: step 1/4. Functionally, catalyzes two activities which are involved in the cyclic version of arginine biosynthesis: the synthesis of acetylglutamate from glutamate and acetyl-CoA, and of ornithine by transacetylation between acetylornithine and glutamate. This is Arginine biosynthesis bifunctional protein ArgJ, mitochondrial from Fusarium vanettenii (strain ATCC MYA-4622 / CBS 123669 / FGSC 9596 / NRRL 45880 / 77-13-4) (Fusarium solani subsp. pisi).